The chain runs to 453 residues: Aldehyde dehydrogenase, dimeric NADP-preferring (453 aa).

At serine 2 the chain carries N-acetylserine. Lysine 178 is modified (N6-acetyllysine). An NAD(+)-binding site is contributed by 188-193; sequence GNTAVG. N6-acetyllysine is present on lysine 194. Residues glutamate 210 and cysteine 244 contribute to the active site.

It belongs to the aldehyde dehydrogenase family. In terms of assembly, homodimer.

Its subcellular location is the cytoplasm. The catalysed reaction is an aldehyde + NAD(+) + H2O = a carboxylate + NADH + 2 H(+). The enzyme catalyses octanal + NAD(+) + H2O = octanoate + NADH + 2 H(+). In terms of biological role, ALDHs play a major role in the detoxification of alcohol-derived acetaldehyde. They are involved in the metabolism of corticosteroids, biogenic amines, neurotransmitters, and lipid peroxidation. Oxidizes medium and long chain aldehydes into non-toxic fatty acids. Preferentially oxidizes aromatic aldehyde substrates. Comprises about 50 percent of corneal epithelial soluble proteins. May play a role in preventing corneal damage caused by ultraviolet light. This is Aldehyde dehydrogenase, dimeric NADP-preferring (ALDH3A1) from Canis lupus familiaris (Dog).